A 180-amino-acid polypeptide reads, in one-letter code: uncharacterized protein (180 aa).

A signal peptide spans methionine 1–alanine 22.

It belongs to the fimbrial protein family.

Part of the yehABCD fimbrial operon. Could contribute to adhesion to various surfaces in specific environmental niches. This is an uncharacterized protein from Escherichia coli (strain K12).